The primary structure comprises 1435 residues: MAYDEDDGEINFNELVGNLLSSHNQEGQEEGEVQGGEQEGDDFEKIYPTSENIEPKHPDDSQHMHNSPDQNIEIPHFVDEEDELVSVVANAVQNIDDEQAKPENHLENGSEHVTSDTADDNHEKEQQQEWAHILQQEILKSDGEPLRENTERRVSTSQHHPSQRTDDALDQDDENLRMAILESLQELNTNEEEEKEPEKHEHAAPNDKLSSKKSSKKKKKDKSKNRESSKDKSSKKSKSSSHSKKHAKDRNKEKQSKPTNNENTLDLSNILENLIHENDNAAIDTAKQTVDIQDNSHTDNTNNEDVEAQALVEATLKAFENELLSSAPTEEPSQEQSIGPVSSRKAVEPPRKPTADDIPLAMLQAFKPKKRPPQEKKKTKSKTSKAASTANKSPASESTSKKKKKKKTVKESNKSQEAYEDDEFSRILADMVNQVVNTSLKETSTHTATQDNKLESESDFTSPVQSQYTTEDASTANDDSLDLNQIMQNAMAMVFQNQNDDEFDENIVEDFNRGLGDLSVSDLLPHDNLSRMEKKSVPKSSSKSEKKTAISRRASKKASRDASSVELTEVPSKPKKPSKTEVSLEKKLRKKYVSIANEAASVARKKRWAKNKELKEKEKLERQTAREERRHKKKLEKQRLAEEQEELKKIVERGPPYPPDLRLTKSGKPKKPYRRWTPEELLKRSQEAEKPRKVKKERKKKEKKMKVPSSALKKIPLFNFVKGNVQPSARHRLNDIEGSLSTIGLHKSPDGVRRILSRPKSEDHEWPLSDSSASQNYDAHLKTVVHKEKIPFHPPWTIPSQPPFALPVARRKKIPNIKKYRKRTNNSFRVSKEGTASTRNRILPAILLPIINTLKAAAKSQTAAGATPEEARKRLATIIQHAKSTVIRAALQARKNSMQAAHSKGTTTELATTASRMKNPLKMIPIFNTSRVKQQLDKQLPARSAGTEISSSESPDKATPDPHSNSTIAGHTLKGVTTPIKIEDSDANVPPVSIAVSTIEPSQDKLELTKRAESVEPVENNVETAKETQSVQEIKENVGTKASEEVTLTEDKTNGDPKNEKRILIESPVEKTDKKKPGEKIATDLNEDASLSDKKDGDEKSTLHSDAAQLTGNEPDSVNTTTGKPKLIDVSLKPLNEAKPKIPIIFPLKRPQIKPEVSVINLVQNLVNTKIPEIKNESVDLGSNITDILSSTITNILPEITATDVKNYQYEDENVKYLKKTPRQVLNLDGLVPPSGRCITKAKRVRRIKKLSADATTAPEADGKANSESITYTFDIPSPEEVQSKRSVVLKFAKARLTEAELSCLKKEINNVRKRRWREMNSTKNWEYDVKSRLKKRANAFFGEGESETKSKWIEERFQEKVSQEKYKDRLETTETQANNTKIVIDDKEILNILAVNMNNLNKARCIEKDIQESFREEKLASLQPKKKRKKSILH.

Disordered stretches follow at residues 16 to 74 (VGNL…NIEI), 88 to 265 (VANA…ENTL), 286 to 309 (AKQTVDIQDNSHTDNTNNEDVEAQ), 322 to 424 (ELLS…DDEF), 442 to 482 (ETST…DSLD), 519 to 708 (SVSD…MKVP), and 934 to 972 (QQLDKQLPARSAGTEISSSESPDKATPDPHSNSTIAGHT). Residues 27–42 (GQEEGEVQGGEQEGDD) are compositionally biased toward acidic residues. Composition is skewed to basic and acidic residues over residues 53-63 (IEPKHPDDSQH), 98-127 (EQAKPENHLENGSEHVTSDTADDNHEKEQQ), and 139-154 (LKSDGEPLRENTERRV). Positions 171–190 (QDDENLRMAILESLQELNTN) constitute a UIM domain. Residues 196–205 (EPEKHEHAAP) show a composition bias toward basic and acidic residues. A compositionally biased stretch (basic residues) spans 211–223 (SKKSSKKKKKDKS). Over residues 224-234 (KNRESSKDKSS) the composition is skewed to basic and acidic residues. Residues 235–249 (KKSKSSSHSKKHAKD) show a composition bias toward basic residues. Positions 286 to 301 (AKQTVDIQDNSHTDNT) are enriched in polar residues. Positions 345-355 (KAVEPPRKPTA) are enriched in basic and acidic residues. Residues 367–383 (KPKKRPPQEKKKTKSKT) are compositionally biased toward basic residues. A compositionally biased stretch (low complexity) spans 384 to 398 (SKAASTANKSPASES). Composition is skewed to polar residues over residues 442-451 (ETSTHTATQD) and 459-482 (DFTSPVQSQYTTEDASTANDDSLD). Basic and acidic residues-rich tracts occupy residues 524–548 (LPHDNLSRMEKKSVPKSSSKSEKKT), 610–628 (KNKELKEKEKLERQTAREE), and 637–652 (KQRLAEEQEELKKIVE). Residues 665-674 (KSGKPKKPYR) show a composition bias toward basic residues. Residues 676–691 (WTPEELLKRSQEAEKP) show a composition bias toward basic and acidic residues. A Nuclear localization signal motif is present at residues 683–699 (KRSQEAEKPRKVKKERK). Residues 692–706 (RKVKKERKKKEKKMK) show a composition bias toward basic residues. A Glycyl lysine isopeptide (Lys-Gly) (interchain with G-Cter in SUMO) cross-link involves residue K981. Residues 1005 to 1014 (KLELTKRAES) are compositionally biased toward basic and acidic residues. Residues 1005–1125 (KLELTKRAES…DSVNTTTGKP (121 aa)) are disordered. A Phosphoserine modification is found at S1014. Positions 1021–1032 (NVETAKETQSVQ) are enriched in polar residues. Composition is skewed to basic and acidic residues over residues 1033-1082 (EIKE…EKIA) and 1091-1103 (LSDKKDGDEKSTL). The residue at position 1067 (S1067) is a Phosphoserine. Residues 1108–1123 (AQLTGNEPDSVNTTTG) are compositionally biased toward polar residues. Residue K1154 forms a Glycyl lysine isopeptide (Lys-Gly) (interchain with G-Cter in SUMO) linkage.

In terms of assembly, interacts with PRP8 and RAP1.

The protein localises to the nucleus. Its function is as follows. Negative regulator of PRP3 and PRP4 genes. The protein is Protein SPP41 (SPP41) of Saccharomyces cerevisiae (strain ATCC 204508 / S288c) (Baker's yeast).